The sequence spans 160 residues: Regulatory protein RecX (160 aa).

Belongs to the RecX family.

It is found in the cytoplasm. Functionally, modulates RecA activity. The sequence is that of Regulatory protein RecX from Pelodictyon phaeoclathratiforme (strain DSM 5477 / BU-1).